A 63-amino-acid polypeptide reads, in one-letter code: Hirudin-P6 (63 aa).

The interaction with thrombin active site stretch occupies residues 1 to 3; sequence MRY. 3 disulfide bridges follow: C6/C14, C16/C28, and C22/C37. A compositionally biased stretch (basic and acidic residues) spans 35–55; sequence KKCVEGEGTRKPQNEGQHDFD. The tract at residues 35 to 63 is disordered; the sequence is KKCVEGEGTRKPQNEGQHDFDPIPEEYLS. The O-linked (GalNAc...) threonine glycan is linked to T43. Residues 53 to 63 form an interaction with fibrinogen-binding exosite of thrombin region; the sequence is DFDPIPEEYLS. Y61 carries the sulfotyrosine modification.

This sequence belongs to the protease inhibitor I14 (hirudin) family. Post-translationally, O-linked glycan consists of Fuc-Gal-GalNAc trisaccharide.

It localises to the secreted. Its function is as follows. Hirudin is a potent thrombin-specific protease inhibitor. It forms a stable non-covalent complex with alpha-thrombin, thereby abolishing its ability to cleave fibrinogen. The chain is Hirudin-P6 from Hirudinaria manillensis (Asian medical leech).